A 227-amino-acid chain; its full sequence is Fibrillarin-like rRNA/tRNA 2'-O-methyltransferase (227 aa).

S-adenosyl-L-methionine contacts are provided by residues 82–83, 100–101, 125–126, and 145–148; these read TT, EF, DA, and DVAQ.

The protein belongs to the methyltransferase superfamily. Fibrillarin family. Interacts with nop5. Component of box C/D small ribonucleoprotein (sRNP) particles that contain rpl7ae, FlpA and nop5, plus a guide RNA.

Its function is as follows. Involved in pre-rRNA and tRNA processing. Utilizes the methyl donor S-adenosyl-L-methionine to catalyze the site-specific 2'-hydroxyl methylation of ribose moieties in rRNA and tRNA. Site specificity is provided by a guide RNA that base pairs with the substrate. Methylation occurs at a characteristic distance from the sequence involved in base pairing with the guide RNA. The sequence is that of Fibrillarin-like rRNA/tRNA 2'-O-methyltransferase from Methanosarcina mazei (strain ATCC BAA-159 / DSM 3647 / Goe1 / Go1 / JCM 11833 / OCM 88) (Methanosarcina frisia).